A 162-amino-acid polypeptide reads, in one-letter code: Sorting nexin-3 (162 aa).

Ala-2 carries the post-translational modification N-acetylalanine. Residues 27 to 151 enclose the PX domain; it reads NFLEIDVSNP…HMFLQDEIID (125 aa). Arg-43 is modified (omega-N-methylarginine). 4 residues coordinate a 1,2-diacyl-sn-glycero-3-phospho-(1D-myo-inositol-3-phosphate): Arg-70, Ser-72, Lys-95, and Arg-118. Residue Ser-72 is modified to Phosphoserine. Lys-95 participates in a covalent cross-link: Glycyl lysine isopeptide (Lys-Gly) (interchain with G-Cter in SUMO2). The binds predominantly to PtdIns(P5) and weaker to PtdIns(P3) abd PtdIns(P4); involved in neurite outgrowth regulation stretch occupies residues 147 to 162; that stretch reads DEIIDKSYTPSKIRHA.

Belongs to the sorting nexin family. Interacts with VPS26A, VPS29. Interacts with VPS35; the interaction with VPS35 is direct. The association with the retromer CSC subcomplex subunits is proposed to represent a functional distinct retromer variant described as SNX3-retromer complex. Interacts with USP10 and SCNN1A. Interacts with TRFC. Interacts with SNX8; 2 molecules of SNX8 seems to associate with one molecule of SNX3. Interacts with PTPRU. Interacts with MON2 and DOP1B. Post-translationally, ubiquitinated, leading to its proteasomal degradation. Deubiquitinated by USP10. In terms of tissue distribution, highly expressed in developing red cells and hematopoietic tissues.

Its subcellular location is the early endosome. It is found in the cytoplasmic vesicle. It localises to the phagosome. In terms of biological role, phosphoinositide-binding protein required for multivesicular body formation. Specifically binds phosphatidylinositol 3-phosphate (PtdIns(P3)). Can also bind phosphatidylinositol 4-phosphate (PtdIns(P4)), phosphatidylinositol 5-phosphate (PtdIns(P5)) and phosphatidylinositol 3,5-biphosphate (PtdIns(3,5)P2). Plays a role in protein transport between cellular compartments. Together with RAB7A facilitates endosome membrane association of the retromer cargo-selective subcomplex (CSC). May act in part as component of the SNX3-retromer complex which mediates the retrograde endosome-to-TGN transport of WLS distinct from the SNX-BAR retromer pathway. Promotes stability and cell surface expression of epithelial sodium channel (ENAC) subunits SCNN1A and SCNN1G. Not involved in EGFR degradation. Involved in the regulation of phagocytosis in dendritic cells possibly by regulating EEA1 recruitment to the nascent phagosomes. Involved in iron homeostasis through regulation of endocytic recycling of the transferrin receptor Tfrc presuambly by delivering the transferrin:transferrin receptor complex to recycling endosomes; the function may involve the CSC retromer subcomplex. Involved in regulation of neurite outgrowth in primary neurons. The protein is Sorting nexin-3 (Snx3) of Mus musculus (Mouse).